The sequence spans 152 residues: Transcriptional regulator MraZ (152 aa).

2 SpoVT-AbrB domains span residues 5-52 (ATLV…PLPE) and 81-124 (ASEC…DETT).

It belongs to the MraZ family. In terms of assembly, forms oligomers.

It localises to the cytoplasm. It is found in the nucleoid. Its function is as follows. Negatively regulates its own expression and that of the subsequent genes in the proximal part of the division and cell wall (dcw) gene cluster. Acts by binding directly to DNA. May also regulate the expression of genes outside the dcw cluster. This Salmonella paratyphi A (strain ATCC 9150 / SARB42) protein is Transcriptional regulator MraZ.